The primary structure comprises 71 residues: Small ribosomal subunit protein bS18 (71 aa).

This sequence belongs to the bacterial ribosomal protein bS18 family. In terms of assembly, part of the 30S ribosomal subunit. Forms a tight heterodimer with protein bS6.

Functionally, binds as a heterodimer with protein bS6 to the central domain of the 16S rRNA, where it helps stabilize the platform of the 30S subunit. The sequence is that of Small ribosomal subunit protein bS18 from Thermosynechococcus vestitus (strain NIES-2133 / IAM M-273 / BP-1).